A 95-amino-acid polypeptide reads, in one-letter code: Small ribosomal subunit protein uS19 (95 aa).

It belongs to the universal ribosomal protein uS19 family.

Its function is as follows. Protein S19 forms a complex with S13 that binds strongly to the 16S ribosomal RNA. This Treponema pallidum (strain Nichols) protein is Small ribosomal subunit protein uS19 (rpsS).